A 356-amino-acid polypeptide reads, in one-letter code: NADH dehydrogenase (ubiquinone) complex I, assembly factor 6 homolog (356 aa).

Residues 1-41 (MIRNSGRILFNSLKNSNVKLINRNVIINSNIRLFSTSTNNT) constitute a mitochondrion transit peptide.

The protein belongs to the NDUFAF6 family.

It localises to the mitochondrion inner membrane. Its function is as follows. Involved in the assembly of mitochondrial NADH:ubiquinone oxidoreductase complex (complex I) at early stages. The sequence is that of NADH dehydrogenase (ubiquinone) complex I, assembly factor 6 homolog from Dictyostelium discoideum (Social amoeba).